The following is a 112-amino-acid chain: Protein Churchill (112 aa).

Positions 2, 5, 30, 33, 59, 61, 64, 66, 71, 88, and 91 each coordinate Zn(2+).

This sequence belongs to the Churchill family.

In terms of biological role, transcriptional activator that mediates FGF signaling during neural development. Plays a role in the regulation of cell movement. Does not bind DNA by itself. In Bos taurus (Bovine), this protein is Protein Churchill (CHURC1).